We begin with the raw amino-acid sequence, 264 residues long: uncharacterized protein (264 aa).

Residues leucine 9 to isoleucine 29 traverse the membrane as a helical segment.

The protein resides in the membrane. This is an uncharacterized protein from Ureaplasma parvum serovar 3 (strain ATCC 700970).